The primary structure comprises 97 residues: DNA-directed RNA polymerase subunit omega (97 aa).

This sequence belongs to the RNA polymerase subunit omega family. The RNAP catalytic core consists of 2 alpha, 1 beta, 1 beta' and 1 omega subunit. When a sigma factor is associated with the core the holoenzyme is formed, which can initiate transcription.

The catalysed reaction is RNA(n) + a ribonucleoside 5'-triphosphate = RNA(n+1) + diphosphate. Functionally, promotes RNA polymerase assembly. Latches the N- and C-terminal regions of the beta' subunit thereby facilitating its interaction with the beta and alpha subunits. In Corynebacterium glutamicum (strain ATCC 13032 / DSM 20300 / JCM 1318 / BCRC 11384 / CCUG 27702 / LMG 3730 / NBRC 12168 / NCIMB 10025 / NRRL B-2784 / 534), this protein is DNA-directed RNA polymerase subunit omega.